The sequence spans 287 residues: tRNA uridine(34) hydroxylase (287 aa).

A Rhodanese domain is found at 132-226 (QGRPVVMLDT…YFEEVGGAHY (95 aa)). Cysteine 186 (cysteine persulfide intermediate) is an active-site residue.

The protein belongs to the TrhO family.

The enzyme catalyses uridine(34) in tRNA + AH2 + O2 = 5-hydroxyuridine(34) in tRNA + A + H2O. In terms of biological role, catalyzes oxygen-dependent 5-hydroxyuridine (ho5U) modification at position 34 in tRNAs. This chain is tRNA uridine(34) hydroxylase, found in Paraburkholderia phytofirmans (strain DSM 17436 / LMG 22146 / PsJN) (Burkholderia phytofirmans).